A 1096-amino-acid chain; its full sequence is DNA-directed RNA polymerase subunit beta (1096 aa).

The segment at 1070–1096 is disordered; the sequence is LMQDVNPRRSTPSRPTYESLGSDYQED.

This sequence belongs to the RNA polymerase beta chain family. As to quaternary structure, in cyanobacteria the RNAP catalytic core is composed of 2 alpha, 1 beta, 1 beta', 1 gamma and 1 omega subunit. When a sigma factor is associated with the core the holoenzyme is formed, which can initiate transcription.

The enzyme catalyses RNA(n) + a ribonucleoside 5'-triphosphate = RNA(n+1) + diphosphate. DNA-dependent RNA polymerase catalyzes the transcription of DNA into RNA using the four ribonucleoside triphosphates as substrates. In Prochlorococcus marinus (strain MIT 9211), this protein is DNA-directed RNA polymerase subunit beta.